A 47-amino-acid polypeptide reads, in one-letter code: Delta-ctenitoxin-Pr2d (47 aa).

5 cysteine pairs are disulfide-bonded: Cys3-Cys17, Cys10-Cys23, Cys14-Cys46, Cys16-Cys31, and Cys25-Cys29.

In terms of tissue distribution, expressed by the venom gland.

The protein localises to the secreted. Its function is as follows. Blocks voltage-gated sodium channels (Nav). Causes rapid general spastic paralysis and death when injected in mice at dose levels of less than 2 ug per mouse. The chain is Delta-ctenitoxin-Pr2d from Phoneutria reidyi (Brazilian Amazonian armed spider).